Consider the following 414-residue polypeptide: FAD-dependent monooxygenase adaC (414 aa).

Glutamate 32, alanine 43, arginine 115, aspartate 325, and glycine 338 together coordinate FAD.

This sequence belongs to the paxM FAD-dependent monooxygenase family. It depends on FAD as a cofactor.

The enzyme catalyses 3-(2,4-dioxopentyl)-3,6,8,9-tetrahydroxy-1-oxo-1,2,3,4-tetrahydroanthracene-2-carboxyl-[ACP] + NADPH + O2 + H(+) = 3-(2,4-dioxopentyl)-2,3,6,8,9-pentahydroxy-1-oxo-1,2,3,4-tetrahydroanthracene-2-carboxyl-[ACP] + NADP(+) + H2O. It functions in the pathway secondary metabolite biosynthesis. Its function is as follows. FAD-dependent monooxygenase; part of the gene cluster that mediates the biosynthesis of the linear tetracyclic TAN-1612 neuropeptide Y receptor antagonist. The decaketide backbone of TAN-1612 is synthesized by the non-reducing polyketide synthase adaA via condensation of one acetyl-CoA starter unit with 9 malonyl-CoA units. The FAD-dependent monooxygenase adaC then performs hydroxylation at C2 while the polaketide chain is still attached to the NRPKS adaA. The alpha-hydroxylation step at C2 appears to be crucial for the following C18-C1 Claisen cyclization and release of the C9-hydroxyl version of TAN-1612 from the NRPKS adaA, two steps performed by the lactamase-like protein adaB. Finally, the O-methyltransferase adaD performs the C9 O-methylation to complete the biosynthesis of TAN-1612. The polypeptide is FAD-dependent monooxygenase adaC (Aspergillus niger).